We begin with the raw amino-acid sequence, 90 residues long: UPF0297 protein lmo1503 (90 aa).

Belongs to the UPF0297 family.

The protein is UPF0297 protein lmo1503 of Listeria monocytogenes serovar 1/2a (strain ATCC BAA-679 / EGD-e).